A 112-amino-acid chain; its full sequence is Large ribosomal subunit protein eL30x (112 aa).

It belongs to the eukaryotic ribosomal protein eL30 family.

This Arabidopsis thaliana (Mouse-ear cress) protein is Large ribosomal subunit protein eL30x (RPL30C).